A 383-amino-acid chain; its full sequence is Schlafen-like protein 3 (383 aa).

Residues 118 to 266 (FDYQSNFSDV…SDKVYQISSG (149 aa)) are SLFN-like fold. Residues 354–374 (LLDIQNIGWIFFGTALSFCIY) form a helical membrane-spanning segment.

This sequence belongs to the Schlafen family. In terms of assembly, component of the PUCH (precursor of 21U RNA 5'-end cleavage holoenzyme) complex; consisting of tofu-1, tofu-2 and either slfl-3 or slfl-4. Within the complex, interacts (via N-terminus) with tofu-2 (via N-terminus); the presence of tofu-1 is required for the interaction.

The protein localises to the mitochondrion membrane. Component of the trimeric PUCH (precursor of 21U RNA 5'-end cleavage holoenzyme) complex, that acts as an endoribonuclease processing the 5'-end of precursor Piwi-interacting RNAs (piRNAs). The PUCH complex consists of tofu-1, tofu-2 and either slfl-3 or slfl-4, where tofu-2 exhibits endoribonuclease activity. PUCH-mediated processing strictly requires a 7-methyl-G cap (m7 G-cap) and an uracil at position three (U3). PUCH also exhibits a strict bias for piRNA precursors with an A or G at position 1. Mature piRNA production is enhanced by the interaction of PUCH with the PETISCO complex, which is stabilizing piRNA precursors and allows their processing by PUCH. This is Schlafen-like protein 3 from Caenorhabditis elegans.